Reading from the N-terminus, the 301-residue chain is Homoserine kinase (301 aa).

An ATP-binding site is contributed by 89 to 99 (KPGSGLGSSSA).

Belongs to the GHMP kinase family. Homoserine kinase subfamily.

It localises to the cytoplasm. The catalysed reaction is L-homoserine + ATP = O-phospho-L-homoserine + ADP + H(+). It participates in amino-acid biosynthesis; L-threonine biosynthesis; L-threonine from L-aspartate: step 4/5. Its function is as follows. Catalyzes the ATP-dependent phosphorylation of L-homoserine to L-homoserine phosphate. This Methanococcus maripaludis (strain DSM 14266 / JCM 13030 / NBRC 101832 / S2 / LL) protein is Homoserine kinase.